The chain runs to 614 residues: Probable Xaa-Pro aminopeptidase P (614 aa).

Residues aspartate 411, aspartate 422, glutamate 520, and glutamate 534 each contribute to the Mn(2+) site.

It belongs to the peptidase M24B family. It depends on Mn(2+) as a cofactor.

The enzyme catalyses Release of any N-terminal amino acid, including proline, that is linked to proline, even from a dipeptide or tripeptide.. Its function is as follows. Catalyzes the removal of a penultimate prolyl residue from the N-termini of peptides. This Sordaria macrospora (strain ATCC MYA-333 / DSM 997 / K(L3346) / K-hell) protein is Probable Xaa-Pro aminopeptidase P (AMPP).